The following is a 621-amino-acid chain: Protein CASP (621 aa).

Residues 1 to 574 (MEIVSRAWES…ILATPKSRTV (574 aa)) are Cytoplasmic-facing. Coiled-coil stretches lie at residues 101 to 445 (LLKG…VQDI) and 473 to 525 (ILTS…FLQS). Residues 575-595 (FFSYLLILHALIMLVLYKFAF) form a helical; Anchor for type IV membrane protein membrane-spanning segment. Residues 596 to 621 (DQSVVRDAETECEYKFHQHMLDNHKQ) lie on the Lumenal side of the membrane.

It belongs to the CASP family.

It localises to the golgi apparatus membrane. In terms of biological role, may be involved in intra-Golgi retrograde transport. The chain is Protein CASP (ceh-44) from Caenorhabditis elegans.